Consider the following 422-residue polypeptide: Vitamin D3 receptor (422 aa).

Positions 21–96 form a DNA-binding region, nuclear receptor; it reads PRICGVCGDR…IGMMKEFILT (76 aa). Zn(2+) contacts are provided by Cys-24, Cys-27, Cys-41, Cys-44, Cys-60, Cys-66, Cys-76, and Cys-79. 2 NR C4-type zinc fingers span residues 24–44 and 60–84; these read CGVC…CEGC and CPFN…LKRC. A hinge region spans residues 97-126; that stretch reads DEEVQRKREMIMKRKEEEALKDSLRPKLSE. The NR LBD domain maps to 127–418; that stretch reads EQQHIIAILL…LTPLVLEVFG (292 aa). Tyr-143 lines the calcitriol pocket. Positions 161–185 are disordered; it reads VSTGSYSPRPTLSFSGDSSSNSDLY. The segment covering 162–172 has biased composition (polar residues); it reads STGSYSPRPTL. Positions 173 to 182 are enriched in low complexity; that stretch reads SFSGDSSSNS. Ser-232 contributes to the calcitriol binding site. Residues 241–259 form an interaction with coactivator LXXLL motif region; it reads KMIPGFRDLTSDDQIVLLK. 4 residues coordinate calcitriol: Arg-269, Ser-273, His-300, and His-392. A 9aaTAD motif is present at residues 411–419; sequence PLVLEVFGN.

The protein belongs to the nuclear hormone receptor family. NR1 subfamily. In terms of assembly, homodimer in the absence of bound vitamin D3. Heterodimer with RXRA after vitamin D3 binding. Interacts with MED1, NCOA1, NCOA2, NCOA3 and NCOA6 coactivators, leading to a strong increase of transcription of target genes. Interacts with the corepressor NCOR1. Interacts with SNW1. Interacts with IRX4, the interaction does not affect its transactivation activity. Interacts with CRY1. Interacts with CRY2 in a ligand-dependent manner. Ubiquitinated by UBR5, leading to its degradation: UBR5 specifically recognizes and binds ligand-bound VDR when it is not associated with coactivators (NCOAs). In presence of NCOAs, the UBR5-degron is not accessible, preventing its ubiquitination and degradation.

The protein resides in the nucleus. Its subcellular location is the cytoplasm. Functionally, nuclear receptor for calcitriol, the active form of vitamin D3 which mediates the action of this vitamin on cells. Enters the nucleus upon vitamin D3 binding where it forms heterodimers with the retinoid X receptor/RXR. The VDR-RXR heterodimers bind to specific response elements on DNA and activate the transcription of vitamin D3-responsive target genes. Plays a central role in calcium homeostasis. Also functions as a receptor for the secondary bile acid lithocholic acid (LCA) and its metabolites. The polypeptide is Vitamin D3 receptor (Vdr) (Mus musculus (Mouse)).